A 240-amino-acid chain; its full sequence is Ditrans,polycis-undecaprenyl-diphosphate synthase ((2E,6E)-farnesyl-diphosphate specific) (240 aa).

The active site involves Asp-18. Position 18 (Asp-18) interacts with Mg(2+). Substrate-binding positions include 19-22, Trp-23, Arg-31, His-35, and 63-65; these read GNGR and SSE. Asn-66 functions as the Proton acceptor in the catalytic mechanism. Substrate contacts are provided by residues Trp-67, Arg-69, Arg-186, and 192-194; that span reads RIS. Glu-205 is a Mg(2+) binding site.

It belongs to the UPP synthase family. As to quaternary structure, homodimer. Mg(2+) serves as cofactor.

The enzyme catalyses 8 isopentenyl diphosphate + (2E,6E)-farnesyl diphosphate = di-trans,octa-cis-undecaprenyl diphosphate + 8 diphosphate. Catalyzes the sequential condensation of isopentenyl diphosphate (IPP) with (2E,6E)-farnesyl diphosphate (E,E-FPP) to yield (2Z,6Z,10Z,14Z,18Z,22Z,26Z,30Z,34E,38E)-undecaprenyl diphosphate (di-trans,octa-cis-UPP). UPP is the precursor of glycosyl carrier lipid in the biosynthesis of bacterial cell wall polysaccharide components such as peptidoglycan and lipopolysaccharide. This Pasteurella multocida (strain Pm70) protein is Ditrans,polycis-undecaprenyl-diphosphate synthase ((2E,6E)-farnesyl-diphosphate specific).